Here is a 243-residue protein sequence, read N- to C-terminus: Probable fructoselysine utilization operon transcriptional repressor (243 aa).

An HTH gntR-type domain is found at 10–78; sequence QLLYATVRQR…QGKGTFVQSQ (69 aa). Positions 38 to 57 form a DNA-binding region, H-T-H motif; that stretch reads ENELCTQYNVSRITIRKAIS.

It functions in the pathway carbohydrate metabolism; fructoselysine degradation [regulation]. May regulate the transcription of the frlABCDR operon, involved in the utilization of fructoselysine and psicoselysine. The protein is Probable fructoselysine utilization operon transcriptional repressor (frlR) of Escherichia coli O157:H7.